Consider the following 354-residue polypeptide: Holliday junction branch migration complex subunit RuvB (354 aa).

The interval 4 to 190 (TDKLAAERII…FGIVARLEFY (187 aa)) is large ATPase domain (RuvB-L). ATP contacts are provided by residues leucine 29, arginine 30, glycine 71, lysine 74, threonine 75, threonine 76, 137 to 139 (EDY), arginine 180, tyrosine 190, and arginine 227. Mg(2+) is bound at residue threonine 75. Residues 191 to 261 (NAEELARIVT…VADAALKMLD (71 aa)) form a small ATPAse domain (RuvB-S) region. Positions 264 to 354 (AVGFDLMDRK…LPGLWDSAAT (91 aa)) are head domain (RuvB-H). Residues arginine 300, arginine 319, and arginine 324 each contribute to the DNA site.

It belongs to the RuvB family. In terms of assembly, homohexamer. Forms an RuvA(8)-RuvB(12)-Holliday junction (HJ) complex. HJ DNA is sandwiched between 2 RuvA tetramers; dsDNA enters through RuvA and exits via RuvB. An RuvB hexamer assembles on each DNA strand where it exits the tetramer. Each RuvB hexamer is contacted by two RuvA subunits (via domain III) on 2 adjacent RuvB subunits; this complex drives branch migration. In the full resolvosome a probable DNA-RuvA(4)-RuvB(12)-RuvC(2) complex forms which resolves the HJ.

The protein resides in the cytoplasm. The catalysed reaction is ATP + H2O = ADP + phosphate + H(+). Its function is as follows. The RuvA-RuvB-RuvC complex processes Holliday junction (HJ) DNA during genetic recombination and DNA repair, while the RuvA-RuvB complex plays an important role in the rescue of blocked DNA replication forks via replication fork reversal (RFR). RuvA specifically binds to HJ cruciform DNA, conferring on it an open structure. The RuvB hexamer acts as an ATP-dependent pump, pulling dsDNA into and through the RuvAB complex. RuvB forms 2 homohexamers on either side of HJ DNA bound by 1 or 2 RuvA tetramers; 4 subunits per hexamer contact DNA at a time. Coordinated motions by a converter formed by DNA-disengaged RuvB subunits stimulates ATP hydrolysis and nucleotide exchange. Immobilization of the converter enables RuvB to convert the ATP-contained energy into a lever motion, pulling 2 nucleotides of DNA out of the RuvA tetramer per ATP hydrolyzed, thus driving DNA branch migration. The RuvB motors rotate together with the DNA substrate, which together with the progressing nucleotide cycle form the mechanistic basis for DNA recombination by continuous HJ branch migration. Branch migration allows RuvC to scan DNA until it finds its consensus sequence, where it cleaves and resolves cruciform DNA. The protein is Holliday junction branch migration complex subunit RuvB of Paraburkholderia phytofirmans (strain DSM 17436 / LMG 22146 / PsJN) (Burkholderia phytofirmans).